The primary structure comprises 352 residues: Histidine biosynthesis bifunctional protein HisB (352 aa).

The interval 1 to 164 (MSQKILFIDR…EIENEILSSF (164 aa)) is histidinol-phosphatase. D9 (nucleophile) is an active-site residue. Mg(2+) contacts are provided by D9 and D11. D11 (proton donor) is an active-site residue. Positions 93, 95, 101, and 103 each coordinate Zn(2+). A Mg(2+)-binding site is contributed by D130. The segment at 165-352 (RSASYQRTTK…ENLASSKGVI (188 aa)) is imidazoleglycerol-phosphate dehydratase.

In the N-terminal section; belongs to the histidinol-phosphatase family. This sequence in the C-terminal section; belongs to the imidazoleglycerol-phosphate dehydratase family. It depends on Mg(2+) as a cofactor. The cofactor is Zn(2+).

It is found in the cytoplasm. The catalysed reaction is D-erythro-1-(imidazol-4-yl)glycerol 3-phosphate = 3-(imidazol-4-yl)-2-oxopropyl phosphate + H2O. It carries out the reaction L-histidinol phosphate + H2O = L-histidinol + phosphate. It functions in the pathway amino-acid biosynthesis; L-histidine biosynthesis; L-histidine from 5-phospho-alpha-D-ribose 1-diphosphate: step 6/9. The protein operates within amino-acid biosynthesis; L-histidine biosynthesis; L-histidine from 5-phospho-alpha-D-ribose 1-diphosphate: step 8/9. This is Histidine biosynthesis bifunctional protein HisB from Campylobacter jejuni subsp. jejuni serotype O:2 (strain ATCC 700819 / NCTC 11168).